Consider the following 843-residue polypeptide: RNA-binding protein 25 (843 aa).

The interval 1–30 is disordered; sequence MSFPPHLNRPPMGIPALPPGIPPPQFPGFP. A compositionally biased stretch (pro residues) spans 12–30; the sequence is MGIPALPPGIPPPQFPGFP. The RRM domain maps to 87 to 164; sequence TTVFVGNISE…KKLLVKVDAK (78 aa). Residue K135 is modified to N6-acetyllysine. Disordered stretches follow at residues 171 to 202 and 219 to 243; these read EWKAKKKASNGNARPETVTNDDEEALDEETKR and SSELNAPSQESDSHPRKKKKEKKED. 2 positions are modified to phosphoserine: S226 and S229. Residues K261, K273, and K430 each participate in a glycyl lysine isopeptide (Lys-Gly) (interchain with G-Cter in SUMO2) cross-link. Composition is skewed to basic and acidic residues over residues 280-433 and 521-573; these read EISK…KRDR and RLRD…ERRR. Disordered stretches follow at residues 280–442 and 498–688; these read EISK…DAYE and EFLE…KRKK. The interval 285 to 644 is necessary for nuclear speckle localization; the sequence is RDTHKKLEEE…PNTPGDESPC (360 aa). Residue K578 forms a Glycyl lysine isopeptide (Lys-Gly) (interchain with G-Cter in SUMO2) linkage. The residue at position 583 (S583) is a Phosphoserine. Basic and acidic residues predominate over residues 590 to 599; sequence KQEKEEKREE. The segment covering 621-630 has biased composition (low complexity); the sequence is SSAPSVSSAS. K671 participates in a covalent cross-link: Glycyl lysine isopeptide (Lys-Gly) (interchain with G-Cter in SUMO2). The segment covering 674–683 has biased composition (polar residues); sequence ASNSPGQPNS. Phosphoserine occurs at positions 677 and 683. Glycyl lysine isopeptide (Lys-Gly) (interchain with G-Cter in SUMO2) cross-links involve residues K688 and K697. S703 is subject to Phosphoserine. K722 is covalently cross-linked (Glycyl lysine isopeptide (Lys-Gly) (interchain with G-Cter in SUMO2)). In terms of domain architecture, PWI spans 750–843; the sequence is PELFAYPLDW…TEAKKIGLVK (94 aa).

As to quaternary structure, interacts with LUC7L3 and SRRM1. Specifically associates with functional splicing complexes, including Sm proteins and U1, U2, U4, U5 and U6 snRNAs. Associates with exon junction complex (EJC) proteins, including APEX1, DDX39B, NCBP1, RBM8A and RNPS1. Interaction with NCBP1 is RNA-dependent. Post-translationally, sumoylated.

Its subcellular location is the nucleus speckle. It localises to the cytoplasm. RNA-binding protein that acts as a regulator of alternative pre-mRNA splicing. Involved in apoptotic cell death through the regulation of the apoptotic factor BCL2L1 isoform expression. Modulates the ratio of proapoptotic BCL2L1 isoform S to antiapoptotic BCL2L1 isoform L mRNA expression. When overexpressed, stimulates proapoptotic BCL2L1 isoform S 5'-splice site (5'-ss) selection, whereas its depletion caused the accumulation of antiapoptotic BCL2L1 isoform L. Promotes BCL2L1 isoform S 5'-ss usage through the 5'-CGGGCA-3' RNA sequence. Its association with LUC7L3 promotes U1 snRNP binding to a weak 5' ss in a 5'-CGGGCA-3'-dependent manner. Binds to the exonic splicing enhancer 5'-CGGGCA-3' RNA sequence located within exon 2 of the BCL2L1 pre-mRNA. Also involved in the generation of an abnormal and truncated splice form of SCN5A in heart failure. The chain is RNA-binding protein 25 (RBM25) from Homo sapiens (Human).